We begin with the raw amino-acid sequence, 223 residues long: Large ribosomal subunit protein bL25 (223 aa).

It belongs to the bacterial ribosomal protein bL25 family. CTC subfamily. Part of the 50S ribosomal subunit; part of the 5S rRNA/L5/L18/L25 subcomplex. Contacts the 5S rRNA. Binds to the 5S rRNA independently of L5 and L18.

In terms of biological role, this is one of the proteins that binds to the 5S RNA in the ribosome where it forms part of the central protuberance. This chain is Large ribosomal subunit protein bL25, found in Albidiferax ferrireducens (strain ATCC BAA-621 / DSM 15236 / T118) (Rhodoferax ferrireducens).